Here is a 211-residue protein sequence, read N- to C-terminus: Receptor expression-enhancing protein 6 (211 aa).

2 helical membrane-spanning segments follow: residues 44–64 (LSLYLLFGYGASLLCNLIGFV) and 89–109 (WVVYALFGLAEFFSDLLLSWF). Positions 190–211 (AGPSTPLEADLKPSQTPQPKDK) are disordered. Residues 202–211 (PSQTPQPKDK) show a composition bias toward polar residues.

This sequence belongs to the DP1 family. In terms of assembly, interacts with STX3. Interacts with clathrin. In terms of tissue distribution, expressed in circumvallate papillae and testis. Expressed in the retina. Isoform 1 is predominantly present in mature optic cups. Isoform 1 expression is confined to the cell body and inner segment of developing rod photoreceptor cells.

Its subcellular location is the endoplasmic reticulum membrane. The protein resides in the cytoplasmic vesicle. The protein localises to the clathrin-coated vesicle membrane. Required for correct function and survival of retinal photoreceptors. Required for retinal development. In rod photoreceptors, facilitates stability and/or trafficking of guanylate cyclases and is required to maintain endoplasmic reticulum and mitochondrial homeostasis. May play a role in clathrin-coated intracellular vesicle trafficking of proteins from the endoplasmic reticulum to the retinal rod plasma membrane. The chain is Receptor expression-enhancing protein 6 (REEP6) from Homo sapiens (Human).